A 548-amino-acid chain; its full sequence is Probable 5-epi-aristolochene synthase 4 (548 aa).

Mg(2+) contacts are provided by Asp-301, Asp-305, Asp-444, Thr-448, and Glu-452. The DDXXD motif motif lies at 301–305; the sequence is DDTFD.

This sequence belongs to the terpene synthase family. As to quaternary structure, monomer. The cofactor is Mg(2+).

Its subcellular location is the cytoplasm. It catalyses the reaction (2E,6E)-farnesyl diphosphate = (+)-5-epi-aristolochene + diphosphate. The protein operates within secondary metabolite biosynthesis; terpenoid biosynthesis. Catalyzes the cyclization of trans,trans-farnesyl diphosphate (FPP) to the bicyclic intermediate 5-epi-aristolochene, initial step in the conversion of FPP to the sesquiterpenoid antifungal phytoalexin capsidiol. Produces germacrene A as an enzyme-bound intermediate that is not released by the enzyme, but is further cyclized to produce the bicyclic 5-epi-aristolochene. This is Probable 5-epi-aristolochene synthase 4 from Nicotiana attenuata (Coyote tobacco).